The chain runs to 480 residues: Glutamate--tRNA ligase (480 aa).

A 'HIGH' region motif is present at residues 21-31 (PSPTGYLHVGG). Residues cysteine 110, cysteine 112, cysteine 137, and histidine 139 each coordinate Zn(2+). The 'KMSKS' region signature appears at 248–252 (KLSKR). Lysine 251 provides a ligand contact to ATP.

This sequence belongs to the class-I aminoacyl-tRNA synthetase family. Glutamate--tRNA ligase type 1 subfamily. Monomer. Requires Zn(2+) as cofactor.

Its subcellular location is the cytoplasm. The catalysed reaction is tRNA(Glu) + L-glutamate + ATP = L-glutamyl-tRNA(Glu) + AMP + diphosphate. Its function is as follows. Catalyzes the attachment of glutamate to tRNA(Glu) in a two-step reaction: glutamate is first activated by ATP to form Glu-AMP and then transferred to the acceptor end of tRNA(Glu). The sequence is that of Glutamate--tRNA ligase from Haemophilus influenzae (strain ATCC 51907 / DSM 11121 / KW20 / Rd).